A 321-amino-acid chain; its full sequence is CRISPR-associated aCascade subunit Cas7/Csa2 2 (321 aa).

Belongs to the CRISPR-associated protein Cas7/Cst2/DevR family. Subtype I-a/Apern subfamily. In terms of assembly, part of the aCascade ribonucleoprotein complex, minimally composed of Csa2 and Cas5a, which binds crRNA. Other possible components of aCascade in strain P1 are Cas6b (SSO1437) and Csa5 (SSO1443), while SSO1399, Cas5b (SSO1400) and SSO1401 have sometimes been seen weakly associated. Csa2 is probably the major RNA-binding subunit. The Csa2-Cas5a-crRNA complex also binds target DNA homologous to crRNA, probably forming an R-loop. Purified aCascade forms a filament about 6 nm in width.

Functionally, CRISPR (clustered regularly interspaced short palindromic repeat) is an adaptive immune system that provides protection against mobile genetic elements (viruses, transposable elements and conjugative plasmids). CRISPR clusters contain spacers, sequences complementary to antecedent mobile elements, and target invading nucleic acids. CRISPR clusters are transcribed and processed into CRISPR RNA (crRNA). In Saccharolobus solfataricus (strain ATCC 35092 / DSM 1617 / JCM 11322 / P2) (Sulfolobus solfataricus), this protein is CRISPR-associated aCascade subunit Cas7/Csa2 2 (csa2b).